Here is a 1102-residue protein sequence, read N- to C-terminus: Ubiquitin carboxyl-terminal hydrolase 7 (1102 aa).

The segment covering 1 to 10 (MNHQQQQQQQ) has biased composition (low complexity). A disordered region spans residues 1 to 38 (MNHQQQQQQQKAGEQQLSEPEDMEMEAGDTDDPPRITQ). The interaction with TSPYL5 stretch occupies residues 1 to 208 (MNHQQQQQQQ…APHGVAWDSK (208 aa)). Phosphoserine is present on S18. Positions 19–31 (EPEDMEMEAGDTD) are enriched in acidic residues. Residue S49 is modified to Phosphoserine. The tract at residues 53–208 (NTAEEDMEDD…APHGVAWDSK (156 aa)) is interaction with p53/TP53, MDM2 and EBNA1. Residues 68-195 (EATFQFTVER…DDKVTFEVFV (128 aa)) enclose the MATH domain. The interval 70 to 205 (TFQFTVERFS…QADAPHGVAW (136 aa)) is necessary for nuclear localization. Positions 214–521 (VGLKNQGATC…NAYMLVYIRE (308 aa)) constitute a USP domain. C223 (nucleophile) is an active-site residue. Catalysis depends on H464, which acts as the Proton acceptor. The interval 622-801 (LWPMQARSNG…HRVDVIFCDK (180 aa)) is interaction with ICP0/VMW110. Position 869 is an N6-acetyllysine; alternate (K869). K869 is covalently cross-linked (Glycyl lysine isopeptide (Lys-Gly) (interchain with G-Cter in SUMO2); alternate). K869 participates in a covalent cross-link: Glycyl lysine isopeptide (Lys-Gly) (interchain with G-Cter in ubiquitin); alternate. K882 participates in a covalent cross-link: Glycyl lysine isopeptide (Lys-Gly) (interchain with G-Cter in SUMO2). S963 carries the phosphoserine modification. 2 positions are modified to N6-acetyllysine: K1084 and K1096.

Belongs to the peptidase C19 family. In terms of assembly, monomer. Homodimer. Part of a complex with DAXX, MDM2, RASSF1 and USP7. Part of a complex with DAXX, MDM2 and USP7. Interacts with MDM2; the interaction is independent of p53/TP53. Interacts with DAXX; the interaction is direct and independent of MDM2 and p53/TP53. Component of a complex composed of KMT2E/MLL5 (isoform 3), OGT (isoform 1) and USP7; the complex stabilizes KMT2E/MLL5, preventing KMT2E/MLL5 ubiquitination and proteasomal-mediated degradation. Interacts (via MATH domain) with KMT2E/MLL5 isoform 3. Interacts with OGT isoform 1. Interacts with FOXO4; the interaction is enhanced in presence of hydrogen peroxide and occurs independently of p53/TP53. Interacts with p53/TP53; the interaction is enhanced in response to DNA damage. Interacts with TSPYL5; this impairs interaction with p53/TP53. Interacts with PTEN; the interaction is direct. Interacts with ATXN1 and the strength of interaction is influenced by the length of the poly-Gln region in ATXN1. A weaker interaction seen with mutants having longer poly-Gln regions. Interacts with KIAA1530/UVSSA. Interacts with ABRAXAS2; the interaction is direct. Identified in a complex with TP53/p53 and ABRAXAS2. Interacts with MEX3C and antagonizes its ability to degrade mRNA. Interacts with DNMT1 and UHRF1. Interacts with FOXP3. Interacts (via MATH domain) with RNF220. Associated component of the Polycomb group (PcG) multiprotein PRC1-like complex. Interacts with EPOP. Interacts with OTUD4 and USP9X; the interaction is direct. Interacts with CRY2. Interacts with REST. Interacts with ERCC6. Part of a complex consisting of USP7, MAGEL2 and TRIM27; directly interacts with MAGEL2; directly interacts with TRIM27. (Microbial infection) Isoform 1 and isoform 2 interact with herpesvirus 1 trans-acting transcriptional protein ICP0/VMW110. Binding to ICP0/VMW110 may modulate the substrate specificity or activity of USP7 to stabilize viral proteins. As to quaternary structure, (Microbial infection) Interacts with Epstein-Barr virus EBNA1; the interaction is independent and simultaneous to EBNA1 interaction with USP7 as well as necessary for PML nuclear bodies disruption by EBNA1. EBNA1, USP7 and CSNK2B form a ternary complex. EBNA1 shows a 10-fold higher affinity than p53/TP53 and can compete with it for USP7 binding. In terms of assembly, (Microbial infection) Interacts with human cytomegalovirus proteins UL35 and UL35A; these interactions inhibit the ability of USP7 to form nuclear bodies. (Microbial infection) Interacts with herpes virus 8/HHV-8 proteins vIRF-1 and vIRF-3; these interactions may disrupt TP53 signaling pathway during viral infection by decreasing the availability of USP7 for deubiquitinating and stabilizing TP53. As to quaternary structure, (Microbial infection) Interacts with herpes virus 8/HHV-8 protein vIRF-2; this interaction modulates antiviral signaling via disruption of USP7 interactions with innate immune signaling proteins TRAF3 and TRAF6 thus affecting their ubiquitination. Post-translationally, isoform 1: Phosphorylated. Isoform 1 is phosphorylated at positions Ser-18 and Ser-963. Isoform 2: Not phosphorylated. In terms of processing, isoform 1: Polyneddylated. Isoform 2: Not Polyneddylated. Isoform 1 and isoform 2: Not sumoylated. Post-translationally, isoform 1 and isoform 2: Polyubiquitinated by herpesvirus 1 trans-acting transcriptional protein ICP0/VMW110; leading to its subsequent proteasomal degradation. Isoform 1: Ubiquitinated at Lys-869. In terms of tissue distribution, expressed in neural progenitor cells (at protein level). Widely expressed. Overexpressed in prostate cancer.

The protein resides in the nucleus. It is found in the cytoplasm. Its subcellular location is the PML body. The protein localises to the chromosome. It catalyses the reaction Thiol-dependent hydrolysis of ester, thioester, amide, peptide and isopeptide bonds formed by the C-terminal Gly of ubiquitin (a 76-residue protein attached to proteins as an intracellular targeting signal).. Its activity is regulated as follows. Inhibited by N-ethyl-maleimide (NEM) and divalent cations. Tolerates high concentrations of NaCl but is inhibited at concentrations of 195 mM and higher. Functionally, hydrolase that deubiquitinates target proteins such as ARMC5, FOXO4, DEPTOR, KAT5, p53/TP53, MDM2, ERCC6, DNMT1, UHRF1, PTEN, KMT2E/MLL5 and DAXX. Together with DAXX, prevents MDM2 self-ubiquitination and enhances the E3 ligase activity of MDM2 towards p53/TP53, thereby promoting p53/TP53 ubiquitination and proteasomal degradation. Deubiquitinates p53/TP53, preventing degradation of p53/TP53, and enhances p53/TP53-dependent transcription regulation, cell growth repression and apoptosis. Deubiquitinates p53/TP53 and MDM2 and strongly stabilizes p53/TP53 even in the presence of excess MDM2, and also induces p53/TP53-dependent cell growth repression and apoptosis. Deubiquitination of FOXO4 in presence of hydrogen peroxide is not dependent on p53/TP53 and inhibits FOXO4-induced transcriptional activity. In association with DAXX, is involved in the deubiquitination and translocation of PTEN from the nucleus to the cytoplasm, both processes that are counteracted by PML. Deubiquitinates KMT2E/MLL5 preventing KMT2E/MLL5 proteasomal-mediated degradation. Involved in cell proliferation during early embryonic development. Involved in transcription-coupled nucleotide excision repair (TC-NER) in response to UV damage: recruited to DNA damage sites following interaction with KIAA1530/UVSSA and promotes deubiquitination of ERCC6, preventing UV-induced degradation of ERCC6. Involved in maintenance of DNA methylation via its interaction with UHRF1 and DNMT1: acts by mediating deubiquitination of UHRF1 and DNMT1, preventing their degradation and promoting DNA methylation by DNMT1. Deubiquitinates alkylation repair enzyme ALKBH3. OTUD4 recruits USP7 and USP9X to stabilize ALKBH3, thereby promoting the repair of alkylated DNA lesions. Acts as a chromatin regulator via its association with the Polycomb group (PcG) multiprotein PRC1-like complex; may act by deubiquitinating components of the PRC1-like complex. Able to mediate deubiquitination of histone H2B; it is however unsure whether this activity takes place in vivo. Exhibits a preference towards 'Lys-48'-linked ubiquitin chains. Increases regulatory T-cells (Treg) suppressive capacity by deubiquitinating and stabilizing the transcription factor FOXP3 which is crucial for Treg cell function. Plays a role in the maintenance of the circadian clock periodicity via deubiquitination and stabilization of the CRY1 and CRY2 proteins. Deubiquitinates REST, thereby stabilizing REST and promoting the maintenance of neural progenitor cells. Deubiquitinates SIRT7, inhibiting SIRT7 histone deacetylase activity and regulating gluconeogenesis. Involved in the regulation of WASH-dependent actin polymerization at the surface of endosomes and the regulation of endosomal protein recycling. It maintains optimal WASH complex activity and precise F-actin levels via deubiquitination of TRIM27 and WASHC1. Mediates the deubiquitination of phosphorylated DEPTOR, promoting its stability and leading to decreased mTORC1 signaling. (Microbial infection) Contributes to the overall stabilization and trans-activation capability of the herpesvirus 1 trans-acting transcriptional protein ICP0/VMW110 during HSV-1 infection. In terms of biological role, (Microbial infection) Upon infection with Epstein-Barr virus, the interaction with viral EBNA1 increases the association of USP7 with PML proteins, which is required for the polyubiquitylation and degradation of PML. The protein is Ubiquitin carboxyl-terminal hydrolase 7 of Homo sapiens (Human).